A 401-amino-acid polypeptide reads, in one-letter code: Elongation factor Tu (401 aa).

The tr-type G domain maps to 10–209 (KPHINVGTIG…AVDEYIPTPQ (200 aa)). The segment at 19–26 (GHVDHGKT) is G1. 19 to 26 (GHVDHGKT) is a GTP binding site. Residue Thr26 coordinates Mg(2+). The segment at 60–64 (GITIA) is G2. A G3 region spans residues 81–84 (DCPG). Residues 81–85 (DCPGH) and 136–139 (NKVD) each bind GTP. Residues 136 to 139 (NKVD) form a G4 region. Residues 174–176 (SAR) are G5.

It belongs to the TRAFAC class translation factor GTPase superfamily. Classic translation factor GTPase family. EF-Tu/EF-1A subfamily. As to quaternary structure, monomer.

It is found in the cytoplasm. It carries out the reaction GTP + H2O = GDP + phosphate + H(+). In terms of biological role, GTP hydrolase that promotes the GTP-dependent binding of aminoacyl-tRNA to the A-site of ribosomes during protein biosynthesis. The sequence is that of Elongation factor Tu from Chloroflexus aurantiacus (strain ATCC 29366 / DSM 635 / J-10-fl).